A 483-amino-acid chain; its full sequence is Aspartyl/glutamyl-tRNA(Asn/Gln) amidotransferase subunit B (483 aa).

The protein belongs to the GatB/GatE family. GatB subfamily. As to quaternary structure, heterotrimer of A, B and C subunits.

It carries out the reaction L-glutamyl-tRNA(Gln) + L-glutamine + ATP + H2O = L-glutaminyl-tRNA(Gln) + L-glutamate + ADP + phosphate + H(+). The enzyme catalyses L-aspartyl-tRNA(Asn) + L-glutamine + ATP + H2O = L-asparaginyl-tRNA(Asn) + L-glutamate + ADP + phosphate + 2 H(+). In terms of biological role, allows the formation of correctly charged Asn-tRNA(Asn) or Gln-tRNA(Gln) through the transamidation of misacylated Asp-tRNA(Asn) or Glu-tRNA(Gln) in organisms which lack either or both of asparaginyl-tRNA or glutaminyl-tRNA synthetases. The reaction takes place in the presence of glutamine and ATP through an activated phospho-Asp-tRNA(Asn) or phospho-Glu-tRNA(Gln). The chain is Aspartyl/glutamyl-tRNA(Asn/Gln) amidotransferase subunit B from Roseiflexus castenholzii (strain DSM 13941 / HLO8).